Consider the following 567-residue polypeptide: Probable serine/threonine-protein kinase WNK6 (567 aa).

In terms of domain architecture, Protein kinase spans 28–285 (IRYKEVIGKG…AKELLLDPFL (258 aa)). ATP is bound by residues 108–111 (TELF) and Lys-158. Asp-175 serves as the catalytic Proton acceptor. Over residues 499–509 (VDATKGEDKSS) the composition is skewed to basic and acidic residues. Residues 499-528 (VDATKGEDKSSIQEVEEATEPVSLEEEERL) form a disordered region. Acidic residues predominate over residues 512 to 525 (EVEEATEPVSLEEE). Positions 519 to 553 (PVSLEEEERLRQELEEIEAKYQEDMKEIATKREEA) form a coiled coil.

It belongs to the protein kinase superfamily. Ser/Thr protein kinase family. WNK subfamily.

It carries out the reaction L-seryl-[protein] + ATP = O-phospho-L-seryl-[protein] + ADP + H(+). It catalyses the reaction L-threonyl-[protein] + ATP = O-phospho-L-threonyl-[protein] + ADP + H(+). May regulate flowering time by modulating the photoperiod pathway. The protein is Probable serine/threonine-protein kinase WNK6 (WNK6) of Arabidopsis thaliana (Mouse-ear cress).